A 176-amino-acid polypeptide reads, in one-letter code: UBA-like domain-containing protein 1 (176 aa).

The segment at 87 to 176 (SESFHGGGGS…RAHPAMEAER (90 aa)) is disordered. Positions 120–137 (TPSWPTAASPPGGPQQHQ) are enriched in low complexity. Residues 138–150 (PQPPLWTPAPPSP) are compositionally biased toward pro residues. Residues 166–176 (PRAHPAMEAER) are compositionally biased toward basic and acidic residues.

The protein belongs to the UBALD family.

This is UBA-like domain-containing protein 1 (Ubald1) from Mus musculus (Mouse).